Consider the following 251-residue polypeptide: Protein DEEPER ROOTING 1 (251 aa).

Positions 46-52 match the IGT motif motif; the sequence is SLLAIGT. Positions 64–105 form a coiled coil; sequence VENSSDNVQSVQDTVKFTEEEVDKIRKEFETLLAIKDQAEAQ.

The protein belongs to the LAZY family.

Its function is as follows. Involved in the control of root growth angle. Involved in cell elongation in the root tip that causes asymmetric root growth and downward bending of the root in response to gravity. The chain is Protein DEEPER ROOTING 1 from Oryza sativa subsp. japonica (Rice).